The following is a 273-amino-acid chain: WAP four-disulfide core domain protein 8 (273 aa).

A helical transmembrane segment spans residues 45 to 65 (LAHSWWSGALLLLLLFLFLSL). The 48-residue stretch at 76–123 (IKQKVGECPRQRLECRNESLSSCKTDFNCKAHFKCCQFACGRKCMDPY) folds into the WAP 1 domain. 15 disulfides stabilise this stretch: Cys83–Cys111, Cys90–Cys115, Cys98–Cys110, Cys104–Cys119, Cys127–Cys177, Cys136–Cys160, Cys152–Cys173, Cys186–Cys214, Cys197–Cys218, Cys201–Cys213, Cys207–Cys222, Cys233–Cys261, Cys240–Cys264, Cys248–Cys260, and Cys254–Cys268. Residues 127-177 (CMLPSDKGNCQDILTRWYFDSQKHQCRAFLYSGCRGNANNFLTKTDCRNAC) form the BPTI/Kunitz inhibitor domain. WAP domains are found at residues 179–226 (FVEK…ARVW) and 228–272 (VKTG…LKPR).

The protein localises to the membrane. The sequence is that of WAP four-disulfide core domain protein 8 (Wfdc8) from Mus musculus (Mouse).